Here is an 89-residue protein sequence, read N- to C-terminus: Small ribosomal subunit protein uS15 (89 aa).

It belongs to the universal ribosomal protein uS15 family. In terms of assembly, part of the 30S ribosomal subunit. Forms a bridge to the 50S subunit in the 70S ribosome, contacting the 23S rRNA.

Its function is as follows. One of the primary rRNA binding proteins, it binds directly to 16S rRNA where it helps nucleate assembly of the platform of the 30S subunit by binding and bridging several RNA helices of the 16S rRNA. Functionally, forms an intersubunit bridge (bridge B4) with the 23S rRNA of the 50S subunit in the ribosome. The protein is Small ribosomal subunit protein uS15 of Elusimicrobium minutum (strain Pei191).